Reading from the N-terminus, the 480-residue chain is ATP synthase subunit beta (480 aa).

Position 158–165 (158–165) interacts with ATP; the sequence is GGAGVGKT.

Belongs to the ATPase alpha/beta chains family. As to quaternary structure, F-type ATPases have 2 components, CF(1) - the catalytic core - and CF(0) - the membrane proton channel. CF(1) has five subunits: alpha(3), beta(3), gamma(1), delta(1), epsilon(1). CF(0) has three main subunits: a(1), b(2) and c(9-12). The alpha and beta chains form an alternating ring which encloses part of the gamma chain. CF(1) is attached to CF(0) by a central stalk formed by the gamma and epsilon chains, while a peripheral stalk is formed by the delta and b chains.

The protein localises to the cell inner membrane. It catalyses the reaction ATP + H2O + 4 H(+)(in) = ADP + phosphate + 5 H(+)(out). Produces ATP from ADP in the presence of a proton gradient across the membrane. The catalytic sites are hosted primarily by the beta subunits. This Acidobacterium capsulatum (strain ATCC 51196 / DSM 11244 / BCRC 80197 / JCM 7670 / NBRC 15755 / NCIMB 13165 / 161) protein is ATP synthase subunit beta.